A 186-amino-acid polypeptide reads, in one-letter code: Adenine phosphoribosyltransferase (186 aa).

The protein belongs to the purine/pyrimidine phosphoribosyltransferase family. In terms of assembly, homodimer.

Its subcellular location is the cytoplasm. The enzyme catalyses AMP + diphosphate = 5-phospho-alpha-D-ribose 1-diphosphate + adenine. The protein operates within purine metabolism; AMP biosynthesis via salvage pathway; AMP from adenine: step 1/1. Its function is as follows. Catalyzes a salvage reaction resulting in the formation of AMP, that is energically less costly than de novo synthesis. In Sulfurovum sp. (strain NBC37-1), this protein is Adenine phosphoribosyltransferase.